We begin with the raw amino-acid sequence, 274 residues long: Acetyl-coenzyme A carboxylase carboxyl transferase subunit beta (274 aa).

In terms of domain architecture, CoA carboxyltransferase N-terminal spans 18–274; that stretch reads IWTKCKKCDY…FYNRQCFLKF (257 aa). Positions 22, 25, 41, and 44 each coordinate Zn(2+). The segment at 22-44 adopts a C4-type zinc-finger fold; it reads CKKCDYILLQKDFEENLMVCPKC.

It belongs to the AccD/PCCB family. In terms of assembly, acetyl-CoA carboxylase is a heterohexamer composed of biotin carboxyl carrier protein (AccB), biotin carboxylase (AccC) and two subunits each of ACCase subunit alpha (AccA) and ACCase subunit beta (AccD). Zn(2+) serves as cofactor.

It is found in the cytoplasm. The catalysed reaction is N(6)-carboxybiotinyl-L-lysyl-[protein] + acetyl-CoA = N(6)-biotinyl-L-lysyl-[protein] + malonyl-CoA. Its pathway is lipid metabolism; malonyl-CoA biosynthesis; malonyl-CoA from acetyl-CoA: step 1/1. Functionally, component of the acetyl coenzyme A carboxylase (ACC) complex. Biotin carboxylase (BC) catalyzes the carboxylation of biotin on its carrier protein (BCCP) and then the CO(2) group is transferred by the transcarboxylase to acetyl-CoA to form malonyl-CoA. In Endomicrobium trichonymphae, this protein is Acetyl-coenzyme A carboxylase carboxyl transferase subunit beta.